The primary structure comprises 240 residues: Pyridoxine 5'-phosphate synthase (240 aa).

Asn6 is a 3-amino-2-oxopropyl phosphate binding site. 8 to 9 (DH) lines the 1-deoxy-D-xylulose 5-phosphate pocket. Arg17 is a binding site for 3-amino-2-oxopropyl phosphate. Catalysis depends on His42, which acts as the Proton acceptor. 1-deoxy-D-xylulose 5-phosphate contacts are provided by Arg44 and His49. Residue Glu69 is the Proton acceptor of the active site. Position 99 (Thr99) interacts with 1-deoxy-D-xylulose 5-phosphate. Catalysis depends on His190, which acts as the Proton donor. 3-amino-2-oxopropyl phosphate is bound by residues Gly191 and 212–213 (GH).

Belongs to the PNP synthase family. Homooctamer; tetramer of dimers.

It localises to the cytoplasm. It carries out the reaction 3-amino-2-oxopropyl phosphate + 1-deoxy-D-xylulose 5-phosphate = pyridoxine 5'-phosphate + phosphate + 2 H2O + H(+). The protein operates within cofactor biosynthesis; pyridoxine 5'-phosphate biosynthesis; pyridoxine 5'-phosphate from D-erythrose 4-phosphate: step 5/5. Functionally, catalyzes the complicated ring closure reaction between the two acyclic compounds 1-deoxy-D-xylulose-5-phosphate (DXP) and 3-amino-2-oxopropyl phosphate (1-amino-acetone-3-phosphate or AAP) to form pyridoxine 5'-phosphate (PNP) and inorganic phosphate. The chain is Pyridoxine 5'-phosphate synthase from Pseudomonas putida (strain ATCC 700007 / DSM 6899 / JCM 31910 / BCRC 17059 / LMG 24140 / F1).